A 1039-amino-acid polypeptide reads, in one-letter code: Tetratricopeptide repeat protein 1 (1039 aa).

TPR repeat units follow at residues 51–84 (REFW…LKDS), 175–208 (ILGF…NPQF), 210–243 (PDPR…DPKN), 251–288 (GLYY…RNND), 326–359 (ADGY…DDRH), 361–393 (LSSV…NQSC), 437–469 (SDLY…LESA), 514–547 (LLLD…HPSF), 634–667 (EFRV…DPKN), 701–734 (ATTL…TGES), 737–770 (YGVL…ATLA), and 799–832 (PENS…EHPP). Residues 838–929 (IEQRAKMAKN…SQQKASEDDM (92 aa)) adopt a coiled-coil conformation. The interval 912–1039 (EEVLEWRKSQ…LNLFSEEDEE (128 aa)) is disordered. The segment covering 927 to 936 (DDMSLSDDEE) has biased composition (acidic residues). Phosphoserine is present on residues Ser-930 and Ser-932. The span at 940 to 953 (GKKKKKDRKKRKSK) shows a compositional bias: basic residues. Ser-959, Ser-961, Ser-964, and Ser-998 each carry phosphoserine. A compositionally biased stretch (acidic residues) spans 992–1006 (YTFDQDSDAEGNQEE). The span at 1007–1018 (EVSRTIEEKQDN) shows a compositional bias: basic and acidic residues.

Its function is as follows. Involved in promoting potassiumm ion uptake. The sequence is that of Tetratricopeptide repeat protein 1 (tpr1) from Schizosaccharomyces pombe (strain 972 / ATCC 24843) (Fission yeast).